Here is a 90-residue protein sequence, read N- to C-terminus: Acylphosphatase (90 aa).

In terms of domain architecture, Acylphosphatase-like spans 5–90 (SFVVRVWGLV…PPKGSGFHTN (86 aa)). Catalysis depends on residues R20 and N38.

This sequence belongs to the acylphosphatase family.

The catalysed reaction is an acyl phosphate + H2O = a carboxylate + phosphate + H(+). This is Acylphosphatase (acyP) from Aeromonas hydrophila subsp. hydrophila (strain ATCC 7966 / DSM 30187 / BCRC 13018 / CCUG 14551 / JCM 1027 / KCTC 2358 / NCIMB 9240 / NCTC 8049).